A 396-amino-acid chain; its full sequence is Elongation factor Tu (396 aa).

The region spanning 10-205 is the tr-type G domain; that stretch reads KSHANIGTIG…AVDEYIPTPE (196 aa). The segment at 19–26 is G1; sequence GHVDHGKT. 19-26 lines the GTP pocket; it reads GHVDHGKT. A Mg(2+)-binding site is contributed by T26. A G2 region spans residues 61–65; it reads GITIS. Residues 82-85 form a G3 region; the sequence is DCPG. Residues 82-86 and 137-140 each bind GTP; these read DCPGH and NKCD. A G4 region spans residues 137–140; that stretch reads NKCD. The G5 stretch occupies residues 175–177; sequence SAL.

Belongs to the TRAFAC class translation factor GTPase superfamily. Classic translation factor GTPase family. EF-Tu/EF-1A subfamily. Monomer.

Its subcellular location is the cytoplasm. It catalyses the reaction GTP + H2O = GDP + phosphate + H(+). Functionally, GTP hydrolase that promotes the GTP-dependent binding of aminoacyl-tRNA to the A-site of ribosomes during protein biosynthesis. This is Elongation factor Tu from Bacillus licheniformis (strain ATCC 14580 / DSM 13 / JCM 2505 / CCUG 7422 / NBRC 12200 / NCIMB 9375 / NCTC 10341 / NRRL NRS-1264 / Gibson 46).